The primary structure comprises 453 residues: tRNA(Ile)-lysidine synthase (453 aa).

Residue 27 to 32 (SGGSDS) participates in ATP binding.

The protein belongs to the tRNA(Ile)-lysidine synthase family.

It localises to the cytoplasm. It catalyses the reaction cytidine(34) in tRNA(Ile2) + L-lysine + ATP = lysidine(34) in tRNA(Ile2) + AMP + diphosphate + H(+). Its function is as follows. Ligates lysine onto the cytidine present at position 34 of the AUA codon-specific tRNA(Ile) that contains the anticodon CAU, in an ATP-dependent manner. Cytidine is converted to lysidine, thus changing the amino acid specificity of the tRNA from methionine to isoleucine. The sequence is that of tRNA(Ile)-lysidine synthase from Rhizobium meliloti (strain 1021) (Ensifer meliloti).